We begin with the raw amino-acid sequence, 143 residues long: MNLNTKYHGNIEYEEKDVIYFPKGIPGFEELKRFIIFPVEDNEVFLVFHSIENEDIGIIITSPFNIEKDYEIQLEEEQITNLKIQDEKDALVLNTVTLSSDIDKITVNLRAPIIINIKEKIGEQIIINSDRYKVKHPLFKEEA.

Belongs to the FliW family. In terms of assembly, interacts with translational regulator CsrA and flagellin(s).

Its subcellular location is the cytoplasm. Its function is as follows. Acts as an anti-CsrA protein, binds CsrA and prevents it from repressing translation of its target genes, one of which is flagellin. Binds to flagellin and participates in the assembly of the flagellum. The sequence is that of Flagellar assembly factor FliW from Clostridium botulinum (strain Langeland / NCTC 10281 / Type F).